Consider the following 459-residue polypeptide: Cysteine--tRNA ligase (459 aa).

C28 is a binding site for Zn(2+). The 'HIGH' region signature appears at 30-40 (ITVYDLCHVGH). Residues C209, H234, and E238 each contribute to the Zn(2+) site. The 'KMSKS' region motif lies at 266–270 (KMSKS). K269 contacts ATP.

This sequence belongs to the class-I aminoacyl-tRNA synthetase family. Monomer. Zn(2+) is required as a cofactor.

Its subcellular location is the cytoplasm. The enzyme catalyses tRNA(Cys) + L-cysteine + ATP = L-cysteinyl-tRNA(Cys) + AMP + diphosphate. The chain is Cysteine--tRNA ligase (cysS) from Pasteurella multocida (strain Pm70).